We begin with the raw amino-acid sequence, 695 residues long: Segment polarity protein dishevelled homolog DVL-1 (695 aa).

Positions 1–85 (MAETKIIYHM…RVVSWLVLAE (85 aa)) constitute a DIX domain. The tract at residues 89–236 (SDAGSQGTDS…RLRQTDRASS (148 aa)) is disordered. Residues 142–151 (SHRRERARRR) show a composition bias toward basic residues. Over residues 152-171 (NRDEAARTNGHPRGDRRREL) the composition is skewed to basic and acidic residues. Positions 177 to 192 (SASTVLSSELESSSFI) are enriched in low complexity. S194 carries the phosphoserine modification. Residues 201–214 (SRLSSSTEQSTSSR) are compositionally biased toward low complexity. A compositionally biased stretch (basic residues) spans 215–228 (LIRKHKCRRRKQRL). The PDZ domain maps to 251–323 (TVTLNMERHH…NDDAVRVLRE (73 aa)). Positions 425–499 (PDSGLEIRDR…SEQCYYVFGD (75 aa)) constitute a DEP domain. Residues 551 to 580 (PAYQDPGFSYGSGSAGSQQSEGSKSSGSTR) show a composition bias toward low complexity. The tract at residues 551 to 641 (PAYQDPGFSY…SQASAVAPGL (91 aa)) is disordered. Residues 622–635 (SQLSRGSSPRSQAS) are compositionally biased toward polar residues.

It belongs to the DSH family. In terms of assembly, interacts with BRD7 and INVS. Interacts (via PDZ domain) with the VANGL1 and VANGL2 (via C-terminus). Interacts (via PDZ domain) with NXN. Interacts with CXXC4. Interacts with ARRB1; the interaction is enhanced by phosphorylation of DVL1. Interacts with CYLD. Interacts (via PDZ domain) with RYK. Self-associates (via DIX domain) and forms higher homooligomers. Interacts (via PDZ domain) with DACT1 and FZD7, where DACT1 and FZD7 compete for the same binding site. Interacts (via DEP domain) with MUSK; the interaction is direct and mediates the formation a DVL1, MUSK and PAK1 ternary complex involved in AChR clustering. Interacts (via PDZ domain) with TMEM88. Interacts with DCDC2. Interacts with FOXK2. Interacts with PKD1 (via extracellular domain). Interacts (via PDZ domain) with CCDC88C/DAPLE; competes with CCDC88C for binding to frizzled receptor FZD7 and dissociates from CCDC88C following initiation of non-canonical Wnt signaling when CCDC88C displaces DVL1 from ligand-activated FZD7. In terms of processing, ubiquitinated; undergoes both 'Lys-48'-linked ubiquitination, leading to its subsequent degradation by the ubiquitin-proteasome pathway, and 'Lys-63'-linked ubiquitination. The interaction with INVS is required for ubiquitination. Deubiquitinated by CYLD, which acts on 'Lys-63'-linked ubiquitin chains.

It is found in the cell membrane. The protein localises to the cytoplasm. Its subcellular location is the cytosol. The protein resides in the cytoplasmic vesicle. Participates in Wnt signaling by binding to the cytoplasmic C-terminus of frizzled family members and transducing the Wnt signal to down-stream effectors. Plays a role both in canonical and non-canonical Wnt signaling. Plays a role in the signal transduction pathways mediated by multiple Wnt genes. Required for LEF1 activation upon WNT1 and WNT3A signaling. DVL1 and PAK1 form a ternary complex with MUSK which is important for MUSK-dependent regulation of AChR clustering during the formation of the neuromuscular junction (NMJ). The sequence is that of Segment polarity protein dishevelled homolog DVL-1 (Dvl1) from Rattus norvegicus (Rat).